Reading from the N-terminus, the 278-residue chain is Adenosylcobinamide-GDP ribazoletransferase (278 aa).

A run of 6 helical transmembrane segments spans residues 44-64 (GIGV…QLLL), 69-89 (FTPL…TGGF), 121-141 (AFGA…LALL), 161-181 (VCAA…VMIW), 204-224 (GGLA…SLAL), and 227-247 (INLI…LRFF).

This sequence belongs to the CobS family. Mg(2+) is required as a cofactor.

It localises to the cell inner membrane. The enzyme catalyses alpha-ribazole + adenosylcob(III)inamide-GDP = adenosylcob(III)alamin + GMP + H(+). It carries out the reaction alpha-ribazole 5'-phosphate + adenosylcob(III)inamide-GDP = adenosylcob(III)alamin 5'-phosphate + GMP + H(+). The protein operates within cofactor biosynthesis; adenosylcobalamin biosynthesis; adenosylcobalamin from cob(II)yrinate a,c-diamide: step 7/7. Functionally, joins adenosylcobinamide-GDP and alpha-ribazole to generate adenosylcobalamin (Ado-cobalamin). Also synthesizes adenosylcobalamin 5'-phosphate from adenosylcobinamide-GDP and alpha-ribazole 5'-phosphate. This chain is Adenosylcobinamide-GDP ribazoletransferase, found in Polaromonas naphthalenivorans (strain CJ2).